Consider the following 317-residue polypeptide: Malate dehydrogenase (317 aa).

Residues 7–13 (GAAGGIG) and Asp34 contribute to the NAD(+) site. Arg81 and Arg87 together coordinate substrate. NAD(+) is bound by residues Asn94 and 117 to 119 (VTN). The substrate site is built by Asn119 and Arg153. His177 functions as the Proton acceptor in the catalytic mechanism. NAD(+) is bound at residue Met231.

The protein belongs to the LDH/MDH superfamily. MDH type 1 family. Homodimer.

It catalyses the reaction (S)-malate + NAD(+) = oxaloacetate + NADH + H(+). In terms of biological role, catalyzes the reversible oxidation of malate to oxaloacetate. The protein is Malate dehydrogenase of Actinobacillus pleuropneumoniae serotype 7 (strain AP76).